We begin with the raw amino-acid sequence, 666 residues long: Enzymatic polyprotein (666 aa).

Aspartate 54 is an active-site residue. In terms of domain architecture, Reverse transcriptase spans 215–445 (ENPIDPIKSK…EKINFLGLEI (231 aa)).

This sequence belongs to the caulimoviridae enzymatic polyprotein family.

The catalysed reaction is DNA(n) + a 2'-deoxyribonucleoside 5'-triphosphate = DNA(n+1) + diphosphate. Functionally, encodes for at least two polypeptides: protease (PR) and reverse transcriptase (RT). The protease processes the polyprotein in cis. Reverse transcriptase is multifunctional enzyme that converts the viral RNA genome into dsDNA in viral cytoplasmic capsids. This enzyme displays a DNA polymerase activity that can copy either DNA or RNA templates, and a ribonuclease H (RNase H) activity that cleaves the RNA strand of RNA-DNA heteroduplexes in a partially processive 3'- to 5'-endonucleasic mode. Neo-synthesized pregenomic RNA (pgRNA) are encapsidated, and reverse-transcribed inside the nucleocapsid. Partial (+)DNA is synthesized from the (-)DNA template and generates the relaxed circular DNA (RC-DNA) genome. After budding and infection, the RC-DNA migrates in the nucleus, and is converted into a plasmid-like covalently closed circular DNA (cccDNA). In Figwort mosaic virus (strain DxS) (FMV), this protein is Enzymatic polyprotein.